A 252-amino-acid chain; its full sequence is D-aminoacyl-tRNA deacylase (252 aa).

The protein belongs to the DtdA deacylase family. Monomer. The cofactor is Zn(2+).

The catalysed reaction is a D-aminoacyl-tRNA + H2O = a tRNA + a D-alpha-amino acid + H(+). The enzyme catalyses glycyl-tRNA(Ala) + H2O = tRNA(Ala) + glycine + H(+). Its function is as follows. D-aminoacyl-tRNA deacylase with broad substrate specificity. By recycling D-aminoacyl-tRNA to D-amino acids and free tRNA molecules, this enzyme counteracts the toxicity associated with the formation of D-aminoacyl-tRNA entities in vivo. This Pyrobaculum neutrophilum (strain DSM 2338 / JCM 9278 / NBRC 100436 / V24Sta) (Thermoproteus neutrophilus) protein is D-aminoacyl-tRNA deacylase.